Consider the following 782-residue polypeptide: Ribosome biogenesis protein ERB1 (782 aa).

2 disordered regions span residues 1–123 (MGSK…RIEK) and 339–361 (PEEY…EDRE). Residues 35–86 (SEDEEDYLPSDDDDDVEDSENEGTGASEDDDDDDDDDDILSDDIPSDVDSEE) are compositionally biased toward acidic residues. Over residues 105-123 (VDPKREEDDGADRNYRIEK) the composition is skewed to basic and acidic residues. 7 WD repeats span residues 433-472 (GHEG…QVWS), 476-516 (NSEE…VTPA), 567-609 (TVRS…TQIP), 612-650 (KLSG…LVKV), 653-692 (PGAK…RPYK), 696-736 (FHGQ…DQLE), and 752-782 (VSKL…RLWM).

It belongs to the WD repeat BOP1/ERB1 family. As to quaternary structure, component of the NOP7 complex, composed of ERB1, NOP7 and YTM1. The complex is held together by ERB1, which interacts with NOP7 via its N-terminal domain and with YTM1 via a high-affinity interaction between the seven-bladed beta-propeller domains of the 2 proteins. The NOP7 complex associates with the 66S pre-ribosome.

It localises to the nucleus. It is found in the nucleolus. Its subcellular location is the nucleoplasm. Component of the NOP7 complex, which is required for maturation of the 25S and 5.8S ribosomal RNAs and formation of the 60S ribosome. The sequence is that of Ribosome biogenesis protein ERB1 from Chaetomium globosum (strain ATCC 6205 / CBS 148.51 / DSM 1962 / NBRC 6347 / NRRL 1970) (Soil fungus).